The sequence spans 310 residues: Glutaminase (310 aa).

Ser67, Asn118, Glu161, Asn168, Tyr192, Tyr244, and Val262 together coordinate substrate.

The protein belongs to the glutaminase family. As to quaternary structure, homotetramer.

The enzyme catalyses L-glutamine + H2O = L-glutamate + NH4(+). The polypeptide is Glutaminase (Legionella pneumophila subsp. pneumophila (strain Philadelphia 1 / ATCC 33152 / DSM 7513)).